Here is a 324-residue protein sequence, read N- to C-terminus: Glutaminase 2 (324 aa).

Residues S75, N127, E171, N178, Y202, Y254, and V272 each coordinate substrate.

Belongs to the glutaminase family. As to quaternary structure, homotetramer.

It catalyses the reaction L-glutamine + H2O = L-glutamate + NH4(+). This chain is Glutaminase 2, found in Halalkalibacterium halodurans (strain ATCC BAA-125 / DSM 18197 / FERM 7344 / JCM 9153 / C-125) (Bacillus halodurans).